A 157-amino-acid chain; its full sequence is Putative glutathione-dependent formaldehyde-activating enzyme (157 aa).

Residues 3-134 (LEGSCHCGAV…WVEIESREQD (132 aa)) enclose the CENP-V/GFA domain. Zn(2+) contacts are provided by cysteine 7, cysteine 9, cysteine 27, cysteine 29, cysteine 32, cysteine 79, and cysteine 82.

This sequence belongs to the Gfa family. Requires Zn(2+) as cofactor.

It catalyses the reaction S-(hydroxymethyl)glutathione = glutathione + formaldehyde. Its pathway is one-carbon metabolism; formaldehyde degradation; formate from formaldehyde (glutathione route): step 1/3. Functionally, catalyzes the condensation of formaldehyde and glutathione to S-hydroxymethylglutathione. This chain is Putative glutathione-dependent formaldehyde-activating enzyme, found in Halomonas elongata (strain ATCC 33173 / DSM 2581 / NBRC 15536 / NCIMB 2198 / 1H9).